We begin with the raw amino-acid sequence, 611 residues long: Acetylcholinesterase (611 aa).

Positions 1–31 are cleaved as a signal peptide; it reads MRPPWCPLYTPSLAAPILLLLLFLLGGGAEA. A disulfide bond links cysteine 97 and cysteine 124. The active-site Acyl-ester intermediate is the serine 231. Cysteine 285 and cysteine 300 are joined by a disulfide. N-linked (GlcNAc...) asparagine glycosylation occurs at asparagine 293. The active-site Charge relay system is glutamate 362. A glycan (N-linked (GlcNAc...) asparagine) is linked at asparagine 378. Cysteines 437 and 557 form a disulfide. Histidine 475 serves as the catalytic Charge relay system. N-linked (GlcNAc...) asparagine glycosylation is present at asparagine 492.

Belongs to the type-B carboxylesterase/lipase family. Interacts with PRIMA1. The interaction with PRIMA1 is required to anchor it to the basal lamina of cells and organize into tetramers. Isoform H generates GPI-anchored dimers; disulfide linked. Isoform T generates multiple structures, ranging from monomers and dimers to collagen-tailed and hydrophobic-tailed forms, in which catalytic tetramers are associated with anchoring proteins that attach them to the basal lamina or to cell membranes. In the collagen-tailed forms, isoform T subunits are associated with a specific collagen, COLQ, which triggers the formation of isoform T tetramers, from monomers and dimers.

Its subcellular location is the synapse. The protein localises to the secreted. It is found in the cell membrane. It catalyses the reaction acetylcholine + H2O = choline + acetate + H(+). In terms of biological role, terminates signal transduction at the neuromuscular junction by rapid hydrolysis of the acetylcholine released into the synaptic cleft. The protein is Acetylcholinesterase (ACHE) of Felis catus (Cat).